The chain runs to 207 residues: Ribosomal RNA small subunit methyltransferase G (207 aa).

S-adenosyl-L-methionine-binding positions include glycine 73, leucine 78, 124–125 (VE), and arginine 139.

It belongs to the methyltransferase superfamily. RNA methyltransferase RsmG family.

It localises to the cytoplasm. The catalysed reaction is guanosine(527) in 16S rRNA + S-adenosyl-L-methionine = N(7)-methylguanosine(527) in 16S rRNA + S-adenosyl-L-homocysteine. Functionally, specifically methylates the N7 position of guanine in position 527 of 16S rRNA. The polypeptide is Ribosomal RNA small subunit methyltransferase G (Cronobacter sakazakii (strain ATCC BAA-894) (Enterobacter sakazakii)).